A 233-amino-acid chain; its full sequence is Large ribosomal subunit protein uL1 (233 aa).

Belongs to the universal ribosomal protein uL1 family. Part of the 50S ribosomal subunit.

Binds directly to 23S rRNA. The L1 stalk is quite mobile in the ribosome, and is involved in E site tRNA release. Functionally, protein L1 is also a translational repressor protein, it controls the translation of the L11 operon by binding to its mRNA. This is Large ribosomal subunit protein uL1 from Trichlorobacter lovleyi (strain ATCC BAA-1151 / DSM 17278 / SZ) (Geobacter lovleyi).